A 174-amino-acid polypeptide reads, in one-letter code: Sarcoplasmic calcium-binding protein (174 aa).

N-acetylserine is present on S1. EF-hand domains are found at residues 3–38 (LWVQ…FAKE), 55–90 (GVWD…EAKS), 91–126 (VVEG…LGLD), and 127–160 (KTMA…FFMN). Ca(2+)-binding residues include D16, D18, D20, and D27. Ca(2+) is bound by residues D104, N106, D108, N110, E115, D138, N140, D142, and E149.

Functionally, like parvalbumins, SCPs seem to be more abundant in fast contracting muscles, but no functional relationship can be established from this distribution. The sequence is that of Sarcoplasmic calcium-binding protein from Hediste diversicolor (Sandworm).